The sequence spans 26 residues: Morintide mO4 (26 aa).

The 26-residue stretch at 1 to 26 (NRLCCSQYGFCGTTSEYCSRVSGCQS) folds into the Chitin-binding type-1 domain. A disulfide bond links cysteine 4 and cysteine 18.

In terms of tissue distribution, seeds (at protein level).

Its function is as follows. Chitin-binding protein which functions in defense against chitin-containing fungal pathogens. This chain is Morintide mO4, found in Moringa oleifera (Horseradish tree).